The following is a 699-amino-acid chain: 1,4-alpha-glucan-branching enzyme (699 aa).

Substrate contacts are provided by residues 59 to 60 and 88 to 90; these read NE and WAP. Trp-104 contacts (1,4-alpha-D-glucosyl)n. Residue 115-118 participates in substrate binding; that stretch reads DYGK. Lys-140 is a (1,4-alpha-D-glucosyl)n binding site. Tyr-170 carries the phosphotyrosine modification. A substrate-binding site is contributed by 330–333; sequence EVLR. The active-site Nucleophile is Asp-354. Residue Glu-409 is the Proton donor of the active site.

It belongs to the glycosyl hydrolase 13 family. GlgB subfamily. Monomer.

It carries out the reaction Transfers a segment of a (1-&gt;4)-alpha-D-glucan chain to a primary hydroxy group in a similar glucan chain.. It participates in glycan biosynthesis; glycogen biosynthesis. Glycogen-branching enzyme participates in the glycogen biosynthetic process along with glycogenin and glycogen synthase. Generates alpha-1,6-glucosidic branches from alpha-1,4-linked glucose chains, to increase solubility of the glycogen polymer. The protein is 1,4-alpha-glucan-branching enzyme (GBE1) of Felis catus (Cat).